A 332-amino-acid chain; its full sequence is Methionine import ATP-binding protein MetN (332 aa).

One can recognise an ABC transporter domain in the interval 2–239 (ITFQDVSKTY…PASDTARRFV (238 aa)). 36 to 43 (GASGAGKS) is an ATP binding site.

The protein belongs to the ABC transporter superfamily. Methionine importer (TC 3.A.1.24) family. In terms of assembly, the complex is composed of two ATP-binding proteins (MetN), two transmembrane proteins (MetI) and a solute-binding protein (MetQ).

It is found in the cell inner membrane. The enzyme catalyses L-methionine(out) + ATP + H2O = L-methionine(in) + ADP + phosphate + H(+). The catalysed reaction is D-methionine(out) + ATP + H2O = D-methionine(in) + ADP + phosphate + H(+). In terms of biological role, part of the ABC transporter complex MetNIQ involved in methionine import. Responsible for energy coupling to the transport system. This is Methionine import ATP-binding protein MetN from Caulobacter vibrioides (strain ATCC 19089 / CIP 103742 / CB 15) (Caulobacter crescentus).